Consider the following 863-residue polypeptide: MICAL-like protein 1 (863 aa).

Residues 2–108 enclose the Calponin-homology (CH) domain; the sequence is AGPRGALLAW…YVSQYYNHFC (107 aa). Disordered stretches follow at residues 119 to 162 and 224 to 670; these read RKGL…TPSS and GTRS…PLIK. The span at 125 to 135 shows a compositional bias: pro residues; that stretch reads CSPPSVAPTPV. Composition is skewed to low complexity over residues 143–159 and 224–244; these read GEELSSGSLSEQGTGQT and GTRSGTRPGPFSQPKQQHQQQ. The 64-residue stretch at 162–225 folds into the LIM zinc-binding domain; it reads STCAACQQHV…EHCARLGPGT (64 aa). Phosphoserine occurs at positions 295 and 309. Thr318 bears the Phosphothreonine mark. Positions 325–340 are enriched in polar residues; that stretch reads LQQENLVEQAGSSSLV. Residues 384 to 395 are compositionally biased toward pro residues; that stretch reads APLPPSSSPGPP. Ser391 is subject to Phosphoserine. The NPF1 motif lies at 425–427; that stretch reads NPF. Residues 427 to 438 are compositionally biased toward acidic residues; sequence FEEEEEDKEEEA. Positions 439-450 are enriched in low complexity; the sequence is PAAPSLATSPAL. Phosphothreonine is present on residues Thr467 and Thr469. Ser470, Ser471, Ser484, and Ser486 each carry phosphoserine. Composition is skewed to low complexity over residues 482 to 495, 505 to 520, and 553 to 566; these read APSASPLALHASRL, PSPALSVESLSSESAS, and SLSTNSSLASSGEL. Ser578 and Ser621 each carry phosphoserine. An NPF2 motif is present at residues 633–635; that stretch reads NPF. Positions 638–656 are enriched in low complexity; sequence KPSPAASPATKKATKGSKP. The mediates the interaction with RAB13 and RAB35 and intramolecular interaction with the CH domain stretch occupies residues 652–863; it reads KGSKPVRPPA…AKSKSPRDKS (212 aa). One can recognise a bMERB domain in the interval 671-818; it reads RKVQADQYIP…EEEEDKMLEA (148 aa). The stretch at 682–711 forms a coiled coil; the sequence is EDIHGEMDTIERRLDALEHRGVLLEEKLRG. Residues 700-863 form a necessary and sufficient to associate with tubular recycling endosome membranes, mediate phosphatidic acid-binding and membrane tubulation region; the sequence is HRGVLLEEKL…AKSKSPRDKS (164 aa). A Phosphoserine modification is found at Ser740. The stretch at 785 to 830 forms a coiled coil; sequence MQELVTLIEQRNAIINCLDEDRQREEEEDKMLEAMIKKKEFQREAE.

As to quaternary structure, homooligomer. Interacts (via NPF1 motif) with EHD1 (via EH domain); the interaction is direct and probably recruits EHD1 to membranes. Interacts with EHD3 (via EH domain). Interacts with RAB35 (GTP-bound form); the interaction is direct and probably recruits MICALL1 to membranes. Interacts with ACAP2; the interaction is indirect through RAB35. Interacts with RAB8A (GTP-bound form); regulates RAB8A association with recycling endosomes. Interacts with RAB13 (GTP-bound form). Interacts with ARF6 (GTP-bound form). Interacts with PACSIN2 (via the SH3 domain). Interacts with DPYSL2.

The protein resides in the recycling endosome membrane. The protein localises to the late endosome membrane. Its subcellular location is the cell projection. It localises to the cilium membrane. It is found in the cytoplasm. The protein resides in the cytoskeleton. The protein localises to the microtubule organizing center. Its subcellular location is the centrosome. It localises to the centriole. Lipid-binding protein with higher affinity for phosphatidic acid, a lipid enriched in recycling endosome membranes. On endosome membranes, acts as a downstream effector of Rab proteins recruiting cytosolic proteins to regulate membrane tubulation. Involved in a late step of receptor-mediated endocytosis regulating for instance endocytosed-EGF receptor trafficking. Alternatively, regulates slow endocytic recycling of endocytosed proteins back to the plasma membrane. Also involved in cargo protein delivery to the plasma membrane. Plays a role in ciliogenesis coordination, recruits EHD1 to primary cilium where it is anchored to the centriole through interaction with tubulins. May indirectly play a role in neurite outgrowth. The polypeptide is MICAL-like protein 1 (MICALL1) (Homo sapiens (Human)).